Consider the following 704-residue polypeptide: Elongation factor G (704 aa).

The 277-residue stretch at 6-282 (NKVRNIGIMA…AVIDYLPTPL (277 aa)) folds into the tr-type G domain. GTP is bound by residues 15–22 (AHIDAGKT), 79–83 (DTPGH), and 133–136 (NKMD).

The protein belongs to the TRAFAC class translation factor GTPase superfamily. Classic translation factor GTPase family. EF-G/EF-2 subfamily.

Its subcellular location is the cytoplasm. Catalyzes the GTP-dependent ribosomal translocation step during translation elongation. During this step, the ribosome changes from the pre-translocational (PRE) to the post-translocational (POST) state as the newly formed A-site-bound peptidyl-tRNA and P-site-bound deacylated tRNA move to the P and E sites, respectively. Catalyzes the coordinated movement of the two tRNA molecules, the mRNA and conformational changes in the ribosome. The sequence is that of Elongation factor G from Corynebacterium diphtheriae (strain ATCC 700971 / NCTC 13129 / Biotype gravis).